A 470-amino-acid polypeptide reads, in one-letter code: TNF receptor-associated factor 4 (470 aa).

An RING-type zinc finger spans residues 18–58; it reads CPLCGKPMREPVQVSTCGHRFCDTCLQEFLSEGVFKCPEDQ. TRAF-type zinc fingers lie at residues 102–154, 155–208, and 209–266; these read HLNT…EAYE, SHEG…DTIQ, and SHQY…KLAM. Lys263 participates in a covalent cross-link: Glycyl lysine isopeptide (Lys-Gly) (interchain with G-Cter in ubiquitin). Positions 277–309 form a coiled coil; that stretch reads HLAMMCALVSRQRQELQELRRELEELSVGSDGV. In terms of domain architecture, MATH spans 307 to 462; the sequence is DGVLIWKIGS…DDAVFIRAAV (156 aa). Ser426 is subject to Phosphoserine.

Belongs to the TNF receptor-associated factor family. B subfamily. As to quaternary structure, homotrimer. Interacts with LTBR/TNFRSF3, NGFR/TNFRSF16, RPS6KB1 and TGFB1I1. Interacts with SMURF1. Interacts (via TRAF domain) with MAP3K4 (via kinase domain). Interacts with NCF1, TICAM1, IRAK1 and TRAF6, and is probably part of a complex containing TRAF4, NCF1, TICAM1, IRAK1 and TRAF6. Interacts (via MATH domain) with GP6 and GP1BB. Interacts with EGFR (via C-terminal region); this interaction promotes the formation of EGFR asymmetric dimers. Interacts with PKM; this interaction promotes PKM kinase activity. Post-translationally, polyubiquitinated, leading to its proteasomal degradation. Ubiquitinated at Lys-263 by the SCF(FBXL2) complex, leading to its degradation by the proteasome. Expressed in epithelial cells of thymus, dendritic cells of lymph node, and in the basal cell layer of epithelia such as epidermis, nasopharynx, respiratory tract, salivary gland, and esophagus.

The protein resides in the cytoplasm. It localises to the nucleus. Its subcellular location is the perinuclear region. The protein localises to the cell junction. It is found in the tight junction. The protein resides in the cell membrane. It localises to the cytoskeleton. The enzyme catalyses S-ubiquitinyl-[E2 ubiquitin-conjugating enzyme]-L-cysteine + [acceptor protein]-L-lysine = [E2 ubiquitin-conjugating enzyme]-L-cysteine + N(6)-ubiquitinyl-[acceptor protein]-L-lysine.. It participates in protein degradation; proteasomal ubiquitin-dependent pathway. In terms of biological role, adapter protein with E3 ligase activity that is involved in many diverse biological processes including cell proliferation, migration, differentiation, DNA repair, platelet activation or apoptosis. Promotes EGFR-mediated signaling by facilitating the dimerization of EGFR and downstream AKT activation thereby promoting cell proliferation. Ubiquitinates SMURF2 through 'Lys-48'-linked ubiquitin chain leading to SMURF2 degradation through the proteasome and subsequently osteogenic differentiation. Promotes 'Lys-63'-mediated ubiquitination of CHK1 which in turn activates cell cycle arrest and activation of DNA repair. In addition, promotes an atypical 'Lys-29'-linked ubiquitination at the C-terminal end of IRS1 which is crucial for insulin-like growth factor (IGF) signal transduction. Regulates activation of NF-kappa-B in response to signaling through Toll-like receptors. Required for normal skeleton development, and for normal development of the respiratory tract. Required for activation of RPS6KB1 in response to TNF signaling. Modulates TRAF6 functions. Inhibits adipogenic differentiation by activating pyruvate kinase PKM activity and subsequently the beta-catenin signaling pathway. The polypeptide is TNF receptor-associated factor 4 (TRAF4) (Homo sapiens (Human)).